The sequence spans 300 residues: Ribosomal RNA small subunit methyltransferase H (300 aa).

S-adenosyl-L-methionine contacts are provided by residues 43-45 (AGH), D60, D105, and Q112.

It belongs to the methyltransferase superfamily. RsmH family.

The protein resides in the cytoplasm. The catalysed reaction is cytidine(1402) in 16S rRNA + S-adenosyl-L-methionine = N(4)-methylcytidine(1402) in 16S rRNA + S-adenosyl-L-homocysteine + H(+). Its function is as follows. Specifically methylates the N4 position of cytidine in position 1402 (C1402) of 16S rRNA. The sequence is that of Ribosomal RNA small subunit methyltransferase H from Deinococcus deserti (strain DSM 17065 / CIP 109153 / LMG 22923 / VCD115).